The following is a 284-amino-acid chain: Lipoyl synthase (284 aa).

[4Fe-4S] cluster is bound by residues Cys38, Cys43, Cys49, Cys64, Cys68, Cys71, and Ser277. A Radical SAM core domain is found at 50–266; it reads WSRGTATFLL…RDEALGMGFS (217 aa).

It belongs to the radical SAM superfamily. Lipoyl synthase family. [4Fe-4S] cluster is required as a cofactor.

The protein resides in the cytoplasm. The enzyme catalyses [[Fe-S] cluster scaffold protein carrying a second [4Fe-4S](2+) cluster] + N(6)-octanoyl-L-lysyl-[protein] + 2 oxidized [2Fe-2S]-[ferredoxin] + 2 S-adenosyl-L-methionine + 4 H(+) = [[Fe-S] cluster scaffold protein] + N(6)-[(R)-dihydrolipoyl]-L-lysyl-[protein] + 4 Fe(3+) + 2 hydrogen sulfide + 2 5'-deoxyadenosine + 2 L-methionine + 2 reduced [2Fe-2S]-[ferredoxin]. The protein operates within protein modification; protein lipoylation via endogenous pathway; protein N(6)-(lipoyl)lysine from octanoyl-[acyl-carrier-protein]: step 2/2. Its function is as follows. Catalyzes the radical-mediated insertion of two sulfur atoms into the C-6 and C-8 positions of the octanoyl moiety bound to the lipoyl domains of lipoate-dependent enzymes, thereby converting the octanoylated domains into lipoylated derivatives. In Chlorobium phaeovibrioides (strain DSM 265 / 1930) (Prosthecochloris vibrioformis (strain DSM 265)), this protein is Lipoyl synthase.